Reading from the N-terminus, the 556-residue chain is Phenylalanine--tRNA ligase beta subunit (556 aa).

Residues 274-349 form the B5 domain; the sequence is HEPEEMEVDL…ITLGLNKIGY (76 aa). D327, D333, E336, and E337 together coordinate Mg(2+).

The protein belongs to the phenylalanyl-tRNA synthetase beta subunit family. Type 2 subfamily. Tetramer of two alpha and two beta subunits. Requires Mg(2+) as cofactor.

Its subcellular location is the cytoplasm. It catalyses the reaction tRNA(Phe) + L-phenylalanine + ATP = L-phenylalanyl-tRNA(Phe) + AMP + diphosphate + H(+). The protein is Phenylalanine--tRNA ligase beta subunit of Korarchaeum cryptofilum (strain OPF8).